Consider the following 89-residue polypeptide: Mitochondrial import inner membrane translocase subunit Tim9 (89 aa).

At A2 the chain carries N-acetylalanine. A Twin CX3C motif motif is present at residues 28–52 (CFLDCVKDFTTREVKPEEVTCSEHC). Cystine bridges form between C28/C52 and C32/C48.

Belongs to the small Tim family. Heterohexamer; composed of 3 copies of TIMM9 and 3 copies of TIMM10/TIM10A, named soluble 70 kDa complex. The complex forms a 6-bladed alpha-propeller structure and associates with the TIMM22 component of the TIM22 complex. Interacts with multi-pass transmembrane proteins in transit. Also forms a complex composed of TIMM9, TIMM10/TIM10A and FXC1/TIM10B.

Its subcellular location is the mitochondrion inner membrane. Functionally, mitochondrial intermembrane chaperone that participates in the import and insertion of multi-pass transmembrane proteins into the mitochondrial inner membrane. May also be required for the transfer of beta-barrel precursors from the TOM complex to the sorting and assembly machinery (SAM complex) of the outer membrane. Acts as a chaperone-like protein that protects the hydrophobic precursors from aggregation and guide them through the mitochondrial intermembrane space. The polypeptide is Mitochondrial import inner membrane translocase subunit Tim9 (Timm9) (Mus musculus (Mouse)).